The following is a 253-amino-acid chain: MTTIDLNCDLGESFGAYKMGNDDEILPFVSSINVACGFHAGDPSVMRQTVEKAMQHNVAIGAHPGFPDLIGFGRRNMNVSANEVYDYVLYQIGALDAFVKAAGGKMQHVKPHGALYNMAATNPEIADAIAKAIYHMNSSLSLYGLANSEAFIQAAEKYNITLVQEAFADRTYKQDGTLTSRTEENALIKNEDEAINQVLQMVKEGYVNSVNGEKVAVQAQTICLHGDGEKAVQFARKIYRIFERNKISICAPK.

This sequence belongs to the LamB/PxpA family. As to quaternary structure, forms a complex composed of PxpA, PxpB and PxpC.

It carries out the reaction 5-oxo-L-proline + ATP + 2 H2O = L-glutamate + ADP + phosphate + H(+). Functionally, catalyzes the cleavage of 5-oxoproline to form L-glutamate coupled to the hydrolysis of ATP to ADP and inorganic phosphate. This chain is 5-oxoprolinase subunit A, found in Bacillus cereus (strain AH820).